Reading from the N-terminus, the 404-residue chain is MQTMKTKVAIIGSGPAGLLLGQLLYKAGIEHVIVEQRSADYVASRIRAGILEQVSVDLLEQAGVDQNLKEKGLPHSGIEILTNGQKFRVDLSALTQGKQVTVYGQTEVTKDLMQAREQAGLCSFYESNDVQIHDFYNAPKVTFESNGTHYQIECDFIAGCDGYHGVCRASVPQDKIKTFEKVYPFGWLGVLADVPPVADELIYVQSERGFALCSMRSETRSRYYIQVPLTDHVENWSDDQFWEELKNRLDPESCEKLVTGPSIEKSIAPLRSFVTEPMRFGKLFLAGDAAHIVPPTGAKGLNLAASDIAYLSSALIEFYTQGSEQGIDQYSEKCLQRVWKAERFSWWMTHLLHRFETESEFDHKIKQAELSYILGSTAGQTTLAENYVGLPYEIKSLDYLKHAS.

Residues Glu-35, 45 to 50 (RIRAGI), and Gln-105 each bind FAD. Residues Tyr-203, 214–216 (SMR), and Tyr-224 each bind substrate. Asp-288 is a binding site for FAD. Pro-295 contacts substrate. 301-302 (LN) contributes to the FAD binding site.

This sequence belongs to the aromatic-ring hydroxylase family. In terms of assembly, homodimer. FAD serves as cofactor.

It catalyses the reaction 4-hydroxybenzoate + NADPH + O2 + H(+) = 3,4-dihydroxybenzoate + NADP(+) + H2O. Its pathway is aromatic compound metabolism; benzoate degradation via hydroxylation; 3,4-dihydroxybenzoate from benzoate: step 2/2. Catalyzes the incorporation of an atom of dioxygen into p-hydroxybenzoate (p-OHB) to form 3,4-dihydroxybenzoate (3,4DOHB). The reaction occurs in two parts: reduction of the flavin adenine dinucleotide (FAD) in the enzyme by reduced nicotinamide adenine dinucleotide phosphate (NADPH) in response to binding p-hydroxybenzoate to the enzyme and oxidation of reduced FAD with oxygen to form a hydroperoxide, which then oxygenates p-hydroxybenzoate. This chain is p-hydroxybenzoate hydroxylase (pobA), found in Acinetobacter baylyi (strain ATCC 33305 / BD413 / ADP1).